A 501-amino-acid chain; its full sequence is L-arabinose isomerase (501 aa).

Mn(2+) contacts are provided by glutamate 307, glutamate 334, histidine 351, and histidine 450.

This sequence belongs to the arabinose isomerase family. Mn(2+) serves as cofactor.

The enzyme catalyses beta-L-arabinopyranose = L-ribulose. Its pathway is carbohydrate degradation; L-arabinose degradation via L-ribulose; D-xylulose 5-phosphate from L-arabinose (bacterial route): step 1/3. Its function is as follows. Catalyzes the conversion of L-arabinose to L-ribulose. This Acidothermus cellulolyticus (strain ATCC 43068 / DSM 8971 / 11B) protein is L-arabinose isomerase.